The primary structure comprises 320 residues: Homoserine kinase (320 aa).

100–110 provides a ligand contact to ATP; the sequence is PLSSGMGSSAA.

Belongs to the GHMP kinase family. Homoserine kinase subfamily.

Its subcellular location is the cytoplasm. The catalysed reaction is L-homoserine + ATP = O-phospho-L-homoserine + ADP + H(+). The protein operates within amino-acid biosynthesis; L-threonine biosynthesis; L-threonine from L-aspartate: step 4/5. Catalyzes the ATP-dependent phosphorylation of L-homoserine to L-homoserine phosphate. The chain is Homoserine kinase from Chlorobium phaeobacteroides (strain DSM 266 / SMG 266 / 2430).